The following is a 168-amino-acid chain: tRNA-splicing endonuclease (168 aa).

Active-site residues include tyrosine 107, histidine 114, and lysine 145.

It belongs to the tRNA-intron endonuclease family. Archaeal short subfamily. In terms of assembly, homotetramer; although the tetramer contains four active sites, only two participate in the cleavage. Therefore, it should be considered as a dimer of dimers.

The catalysed reaction is pretRNA = a 3'-half-tRNA molecule with a 5'-OH end + a 5'-half-tRNA molecule with a 2',3'-cyclic phosphate end + an intron with a 2',3'-cyclic phosphate and a 5'-hydroxyl terminus.. Endonuclease that removes tRNA introns. Cleaves pre-tRNA at the 5'- and 3'-splice sites to release the intron. The products are an intron and two tRNA half-molecules bearing 2',3' cyclic phosphate and 5'-OH termini. Recognizes a pseudosymmetric substrate in which 2 bulged loops of 3 bases are separated by a stem of 4 bp. This Thermococcus kodakarensis (strain ATCC BAA-918 / JCM 12380 / KOD1) (Pyrococcus kodakaraensis (strain KOD1)) protein is tRNA-splicing endonuclease.